The following is a 230-amino-acid chain: CDP-diacylglycerol--inositol 3-phosphatidyltransferase (230 aa).

Residues 1–28 (MPSAKSSDLSPTKTNLESTTKQKVSVQD) are Cytoplasmic-facing. The chain crosses the membrane as a helical span at residues 29 to 51 (IFLYIPNLIGYLRIITAIISFLC). Topologically, residues 52–57 (MANHPV) are lumenal. Residues 58 to 77 (ATLIFYGISGFLDAFDGYAA) form a helical membrane-spanning segment. Positions 70 and 73 each coordinate Mg(2+). Residues Gly74, Arg78, and Thr84 each coordinate a CDP-1,2-diacyl-sn-glycerol. Residues 78–89 (RKFNQGTRFGAV) lie on the Cytoplasmic side of the membrane. A helical membrane pass occupies residues 90-110 (LDMVTDRCATSSLIVYLGVLY). Asp91 and Asp95 together coordinate Mg(2+). Asp95 (proton acceptor) is an active-site residue. Topologically, residues 111-112 (PQ) are lumenal. The helical transmembrane segment at 113–133 (YTVFWQILVSLDLSSHYMHMY) threads the bilayer. The Cytoplasmic portion of the chain corresponds to 134–161 (AMLSAGSTSHKNVDETQSKLLSLYYNNR). The chain crosses the membrane as a helical span at residues 162-182 (LVLFFVCLINELFYMAVYLHY). At 183–184 (YK) the chain is on the lumenal side. Residues 185–205 (FFWLGTVMLVASTPIWLFKQI) traverse the membrane as a helical segment. At 206-230 (ANIIQLKNASLILARMDAHDHSKRD) the chain is on the cytoplasmic side.

Belongs to the CDP-alcohol phosphatidyltransferase class-I family. The cofactor is Mn(2+). Mg(2+) is required as a cofactor.

The protein localises to the endoplasmic reticulum membrane. It carries out the reaction a CDP-1,2-diacyl-sn-glycerol + myo-inositol = a 1,2-diacyl-sn-glycero-3-phospho-(1D-myo-inositol) + CMP + H(+). Its activity is regulated as follows. Inhibited by calcium and zinc ions. Inhibited by nucleoside triphosphates and diphosphates. Its function is as follows. Catalyzes the synthesis of phosphatidylinositol (PtdIns). Required for proper membrane dynamics and cell wall integrity. This chain is CDP-diacylglycerol--inositol 3-phosphatidyltransferase, found in Candida albicans (strain SC5314 / ATCC MYA-2876) (Yeast).